The sequence spans 787 residues: Phenylalanine--tRNA ligase beta subunit (787 aa).

One can recognise a tRNA-binding domain in the interval 39–149 (APAFAGVVIA…EDAPVGTNIR (111 aa)). Residues 400–475 (PEAKQVGLRL…RVYGYENIPD (76 aa)) enclose the B5 domain. Mg(2+) is bound by residues Asp453, Asp459, Glu462, and Glu463. Residues 694–786 (SKFQPVRRDL…AATAAGARLR (93 aa)) enclose the FDX-ACB domain.

This sequence belongs to the phenylalanyl-tRNA synthetase beta subunit family. Type 1 subfamily. Tetramer of two alpha and two beta subunits. Requires Mg(2+) as cofactor.

It is found in the cytoplasm. It carries out the reaction tRNA(Phe) + L-phenylalanine + ATP = L-phenylalanyl-tRNA(Phe) + AMP + diphosphate + H(+). This Neisseria meningitidis serogroup B (strain ATCC BAA-335 / MC58) protein is Phenylalanine--tRNA ligase beta subunit (pheT).